Consider the following 152-residue polypeptide: MVKAVAVLGSSEGVKGTIYFVQEGDGPTTVTGSITGLKPGLHGFHVHALGDTTNGCMSTGPHFNPAGKEHGAPEDENRHAGDLGNATAGEDGIVTVSVVDSQIPLSGPNSIIGRAVVVHADPDDLGKGGHELSKTTGNAGGRVACGIIGLQG.

3 residues coordinate Cu cation: His45, His47, and His62. The disordered stretch occupies residues 61–87; it reads PHFNPAGKEHGAPEDENRHAGDLGNAT. The Zn(2+) site is built by His62, His70, His79, and Asp82. Over residues 67–81 the composition is skewed to basic and acidic residues; that stretch reads GKEHGAPEDENRHAG. His119 is a binding site for Cu cation.

The protein belongs to the Cu-Zn superoxide dismutase family. As to quaternary structure, homodimer. Requires Cu cation as cofactor. Zn(2+) serves as cofactor.

The protein localises to the cytoplasm. It carries out the reaction 2 superoxide + 2 H(+) = H2O2 + O2. Its function is as follows. Destroys radicals which are normally produced within the cells and which are toxic to biological systems. This chain is Superoxide dismutase [Cu-Zn], found in Zingiber officinale (Ginger).